The sequence spans 148 residues: NADPH-dependent 7-cyano-7-deazaguanine reductase (148 aa).

Cys-50 functions as the Thioimide intermediate in the catalytic mechanism. Asp-57 functions as the Proton donor in the catalytic mechanism. Substrate is bound by residues Val-72–Ser-74 and His-91–Glu-92.

The protein belongs to the GTP cyclohydrolase I family. QueF type 1 subfamily.

The protein resides in the cytoplasm. It catalyses the reaction 7-aminomethyl-7-carbaguanine + 2 NADP(+) = 7-cyano-7-deazaguanine + 2 NADPH + 3 H(+). It functions in the pathway tRNA modification; tRNA-queuosine biosynthesis. Catalyzes the NADPH-dependent reduction of 7-cyano-7-deazaguanine (preQ0) to 7-aminomethyl-7-deazaguanine (preQ1). This Helicobacter acinonychis (strain Sheeba) protein is NADPH-dependent 7-cyano-7-deazaguanine reductase.